A 533-amino-acid chain; its full sequence is Pre-mRNA-splicing factor cwf24 (533 aa).

Polar residues predominate over residues 1–17; it reads MEQKNLNINQASGSKIN. The interval 1 to 69 is disordered; that stretch reads MEQKNLNINQ…MRDNIPIVSG (69 aa). Residues 27-43 are compositionally biased toward basic residues; sequence SRRRHRPRQGLKRKKGF. Residues 184–212 form a C3H1-type zinc finger; it reads DYQPDVCKDYKLTGYCGYGDTCKFLHMRE. Residues 254-292 form an RING-type zinc finger; that stretch reads CLICKKDYRSPIATTCGHHFCEQCAITRYRKTPTCIQCG. Positions 379–524 constitute an N-acetyltransferase domain; sequence YFIREITESN…SAFYMVCPLS (146 aa).

Belongs to the CWC24 family. Belongs to the 40S cdc5-associated complex (or cwf complex), a spliceosome sub-complex reminiscent of a late-stage spliceosome composed of the U2, U5 and U6 snRNAs and at least brr2, cdc5, cwf2/prp3, cwf3/syf1, cwf4/syf3, cwf5/ecm2, spp42/cwf6, cwf7/spf27, cwf8, cwf9, cwf10, cwf11, cwf12, prp45/cwf13, cwf14, cwf15, cwf16, cwf17, cwf18, cwf19, cwf20, cwf21, cwf22, cwf23, cwf24, cwf25, cwf26, cyp7/cwf27, cwf28, cwf29/ist3, lea1, msl1, prp5/cwf1, prp10, prp12/sap130, prp17, prp22, sap61, sap62, sap114, sap145, slu7, smb1, smd1, smd3, smf1, smg1 and syf2.

The protein localises to the nucleus. Involved in mRNA splicing. The sequence is that of Pre-mRNA-splicing factor cwf24 (cwf24) from Schizosaccharomyces pombe (strain 972 / ATCC 24843) (Fission yeast).